Here is a 3305-residue protein sequence, read N- to C-terminus: MGKSNRLLSVLFVISVLWKAAYGNGKCQIACKGSSSPSFAAGQKYNYGVEGTVSVYLTGADNQETSLKMLGQASVSAISNCELELSVHNMVLSGPDGKKYPCPQGIEKPVRFSYQDGRVGPEICAAEDDSRRSLNIKRAIISLLQAEQKPSVQVDVFGVCPTEVSSSQEGGAVLLHRSRDLSRCAHREQGRNDFVNSIANPDAGIKDLQVLQSMLNVESKVNNGVPEKVSAIEEYLYKPFSVGENGARAKVHTKLTLSGKGGAGGGNAHCTESRSIIFDVPHGTSSASGNLNSVISAVKETARTVANDASSKSAGQFAQLVRIMRTSSKDDLMRIYSQVKAHQLEKRVYLDALLRAGTGESIEASIQILKSKDLSQLEQHLVFLSLGNARHVNNPALKAAAGLLDMPNLPKEVYLGAGALGGAYCREHDCHNVKPEGIVALSNKLGSKLQNCRPKNKPDEDVVVAILKGIRNIRHLEDSLIDKLVHCAVDNNVKARVRAVALEAFHADPCSAKIHKTAMDIMKNRQLDSEIRIKAYLAVIECPCSHSASEIKNLLDSEPVHQVGNFITSSLRHIRSSSNPDKQLAKKHYGQIRTPNKFKVDERKYSFYREMSYKLDALGAGGSVDQTVIYSQTSFLPRSVNFNLTVDLFGQSYNVMELGGRQGNLDRVVEHFLGPKSFLRTEDPQALYDNLVKRFQESKKKVEDSLSRGRRSIKSEIDVFDKNLKAESAPYNNELDLDIYVKLFGTDAVFLSFGDDKGFDFNKMLDQILGGCNSGINKAKHFQQEIRSHLLFMDAELAYPTSVGLPLRLNLIGAATARLDVATNIDIRQIFQSPQNAKADIKFVPSTDFEISGAFIIDADAFSTGIKVITNLHSSTGVHVNAKVLENGRGIDLQIGLPVDKQELIAASSDLVFVTAEKGQKEKQKVIKMEKGENEYSACFDQLSGPLGLTMCYDMVLPFPIVNRNDKLDSIAKAMGKWPLSGSAKFKLFLEKNDLRGYHIKAVVKEDKDAGRRSFELLLDTEGAKTRRSQLTGEAVYNENEVGVKLGLEAVGKVIYGHIWAHKKPNELVASVKGKLDDIEYSGKLGFSVQGNEHRAVYKPIFEYSLPDGSSPGSKKYEVKIDGQVIRECDGRVTKYTFDGVHVNLQNAEKPLEICGSVSTVAQPREVEFDVEVKHYASLKGSWKGSDVVLAFNNQLNPKINFDLKGKFENTDSMHNELDIHYGPNRGDNNARITFSQILKYHVENSKNFNVITKNNLEIRAVPFKLVANADVDPKKIDIDIEGQLQDKSAGFNLDARTHIKKEGDYSIKVKANLNNANLEAFSRRDIVNAEKSNVENYIDMKGVGRYELSGFVLHKTKPNDVNVGFIGHLKINGGGKNEDFKINIGHIETPAVFSSHATISGSRGDIIDYLLKIMRTANPNGNFKLVIKDSIAANGQYKVTDADGKGNGLIIIDFKKINRKIKGDVRFTAKEPVFNADIDLFLNFEKDNSDKVHFSTYNKKTDKVMDTKNKLEYAGKRTEVNIHQDGILAVTGKAHTVAELVLPTERCLSLKIDHDGAFKDGLYNGHMDMTISDAPKRGSGASTISYKGKVSNSNLDQEIIDYEGQINFKLKDGKNLQSTFSLKNNPDGDKFKYEFKSDVNGNLIPKPANLVATGTYSNSENEIDETYRLKGSYGSDIGFELAGVGTIKFLDAGDKKYLDDYTLTVRLPFEKAHDIKWVSTVLFLQPQGQEMTEYTLVESVQINADVYKIDANGKVGPKNGYGAVKVLVPHVEPFVLDYNYKSSHEGEKNNNYVELKTKYGKGKSASMVVDSSYAPHYSTLKVKANTPNNDKFKKLDVTVHSKNPSPDAYSNSVVVDADGRVYKIDSSIVLSKAHPVLDIQYHSPSSDKIRRLYLQGSSLSSTQGKLEVKVDNINDICLDAVSEANVQKDNVAFKVVANAKELGWKNYGIDISSKDSGSGKRLEFHATNDNKNVLSGSTSFISKQEGQKTIIEGSGSVKVKEEQKSANFKYIRTVFTDSNEKGVETFFNVALGERSYVAESRVTNYEYKNSYVYCEEKKQCAHAEIQSKIDMSTPGMIVNVINAGLDLRKLGVAPELGLQMRDEVSDRRPPRFTLDLHINKEDRKYHLHAYNTPENGHYASGVTVRLPSRVMALEYTLTHPTSQDLPFPIKGEACLDLDKNRPGHKTSARFLVDYSNSGSEDKAVAEIGFFHPKIEKEAVIRLNAFMKRPENGCFKIESSASLCHSALGTDRVAKVMFETTPNSVKFLADTPFVKAIDVEGSFNVNQQQRTQQCLFRICLLEGKPVQMSALVKDYQYYEFTTEESNRKLSYVGHLIPEKRVDISTDIILSGDKKNIAHGALFLQDNLVKSDYGLSKENFNYFLNALKKDLDTLEDRIKNVGEKASKDVEAVTQRAAPYFKKVEDNFRAEWNRFYQEIADDKVFKEISHVFNEIVQYIAKFIDEILQGTKRSWTPSCRPTLSHPRNREMYKKQIEPQVKQLYDTLGALMKEYLDGVIDVVAHFAAIVTDFFEKHKAELQELTNVFTEIFKDLTRLVVAQLKELPPKIAQIYNDIVSQITNMPFVVVLQEKWKEFNFAERAVQLVSQAYEAFSKILPTDELKEFAKALNAYLLKKIKEEKMEESKELPRAVREAGQRVLLITSIPALAVRRPRLRRWTWHHLKLAVGAGASAPSLGAASWSALRQLAAGDGPPALAPRGLPTAQLDPLDEVPNKLRAVVVNGQHIFTFDGRHLTFPGTCRYVLIHDHVDRNFTVLMQLANGQPKALVLEDKSGTIIELKDNGQVILNCQSHGFPVVEQDVFAFRQTSGRIGLCSKYGLMAFCTSKFEVCYFEVNGFYLGKLPGLLGDGNNEPYDDFRMPNGKICSSESEFGNSYRLSRSCPAANAPAHDHHQMHAPLPKPCERVFSGTSPLRPLSLMLDIAPFRQACIHAVTGADADKDLQQACDLARGYRRSRSRGCCPPRCPTPACAARTATGPGSWATPTSTNCPTDSLISSSPLRPLRTTPAHYKNMVVPLVSQLVDMLKGKHCTDIKVFLVGHTSKHPYPILYDTDLKLKNAKVSFDDKSRYDRIPFVKTGHEKFDSYSKTVVDFLNYIKIELGITNIEASQGQIFDLPLRPGAVKHVIFVTGGPTISQFFLLETVRALRNKVIIDEMAMSASLVTSTPGLKIGGGKNAAQIVGYEKHGVLLLGEKKQSKDSEAVRATLEVEDDPFSDAVEFANGVVFSASNYAALPAGQQKQFIQTAAHNIIQRMWREQIVQQCTCVFVDPFRVRSVCFNKARTEVARRRK.

A signal peptide spans 1–23 (MGKSNRLLSVLFVISVLWKAAYG). The Vitellogenin domain occupies 39 to 640 (FAAGQKYNYG…SQTSFLPRSV (602 aa)). N-linked (GlcNAc...) asparagine glycosylation is found at Asn643 and Asn2769. The region spanning 2733 to 2899 (LRAVVVNGQH…NSYRLSRSCP (167 aa)) is the VWFD domain. A disulfide bridge links Cys2757 with Cys2898.

Cleaved into 2 chains by furin protease. However, prevention of cleavage does not impair its function. Post-translationally, N-glycosylated.

It is found in the secreted. Functionally, constitutes the major component of lipophorin, which mediates transport for various types of lipids in hemolymph. Acts by forming lipoprotein particles that bind lipoproteins and lipids. May be required for morphogens wingless (wg) and hedgehog (hh) function, possibly by acting as vehicles for the movement of wg and hh. The polypeptide is Apolipophorins (Manduca sexta (Tobacco hawkmoth)).